Here is a 444-residue protein sequence, read N- to C-terminus: Glucoside xylosyltransferase 2 (444 aa).

Topologically, residues 1–4 (MKLR) are cytoplasmic. A helical; Signal-anchor for type II membrane protein membrane pass occupies residues 5-25 (SKAAALLLLALAVLLLALLSL). Residues 26 to 444 (RARRDPEPPG…IIHMGPNPMS (419 aa)) are Lumenal-facing. The tract at residues 31–101 (PEPPGFPARP…LARRPGETRS (71 aa)) is disordered. Over residues 68–83 (RSPRRQPPRLRPRAGR) the composition is skewed to basic residues. Residues 87–101 (ASREKLARRPGETRS) show a composition bias toward basic and acidic residues. A glycan (N-linked (GlcNAc...) asparagine) is linked at N275.

This sequence belongs to the glycosyltransferase 8 family.

It localises to the membrane. The enzyme catalyses 3-O-(beta-D-glucosyl)-L-seryl-[EGF-like domain protein] + UDP-alpha-D-xylose = 3-O-[alpha-D-xylosyl-(1-&gt;3)-beta-D-glucosyl]-L-seryl-[EGF-like domain protein] + UDP + H(+). In terms of biological role, glycosyltransferase which elongates the O-linked glucose attached to EGF-like repeats in the extracellular domain of Notch proteins by catalyzing the addition of xylose. In Mus musculus (Mouse), this protein is Glucoside xylosyltransferase 2 (Gxylt2).